Consider the following 189-residue polypeptide: Small ribosomal subunit protein uS5 (189 aa).

An S5 DRBM domain is found at 20–83; sequence FVDRLVHINR…ESAKRALIRV (64 aa).

Belongs to the universal ribosomal protein uS5 family. As to quaternary structure, part of the 30S ribosomal subunit. Contacts proteins S4 and S8.

Its function is as follows. With S4 and S12 plays an important role in translational accuracy. Functionally, located at the back of the 30S subunit body where it stabilizes the conformation of the head with respect to the body. This chain is Small ribosomal subunit protein uS5, found in Beijerinckia indica subsp. indica (strain ATCC 9039 / DSM 1715 / NCIMB 8712).